The sequence spans 392 residues: Odorant receptor 85f (392 aa).

Residues 1 to 36 (MEPVQYSYEDFARLPTTVFWIMGYDMLGVPKTRSRR) are Cytoplasmic-facing. Residues 37–57 (ILYWIYRFLCLASHGVCVGVM) traverse the membrane as a helical segment. Over 58-69 (VFRMVEAKTIDN) the chain is Extracellular. A glycan (N-linked (GlcNAc...) asparagine) is linked at asparagine 69. The chain crosses the membrane as a helical span at residues 70 to 90 (VSLIMRYATLVTYIINSDTKF). Topologically, residues 91 to 130 (ATVLQRSAIQSLNSKLAELYPKTTLDRIYHRVNDHYWTKS) are cytoplasmic. Residues 131 to 151 (FVYLVIIYIGSSIMVVIGPII) form a helical membrane-spanning segment. Residues 152–179 (TSIIAYFTHNVFTYMHCYPYFLYDPEKD) lie on the Extracellular side of the membrane. Residues 180-200 (PVWIYISIYALEWLHSTQMVI) traverse the membrane as a helical segment. The Cytoplasmic segment spans residues 201-268 (SNIGADIWLL…NDLNGIFGKS (68 aa)). The helical transmembrane segment at 269–289 (LLLSLLTTAAVICTVAVYTLI) threads the bilayer. At 290-295 (QGPTLE) the chain is on the extracellular side. The chain crosses the membrane as a helical span at residues 296-316 (GFTYVIFIGTSVMQVYLVCYY). Topologically, residues 317–363 (GQQVLDLSGEVAHAVYNHDFHDASIAYKRYLLIIIIRAQQPVELNAM) are cytoplasmic. The helical transmembrane segment at 364-384 (GYLSISLDTFKQLMSVSYRVI) threads the bilayer. Topologically, residues 385 to 392 (TMLMQMIQ) are extracellular.

It belongs to the insect chemoreceptor superfamily. Heteromeric odorant receptor channel (TC 1.A.69) family. Or49a subfamily. In terms of assembly, interacts with Orco. Complexes exist early in the endomembrane system in olfactory sensory neurons (OSNs), coupling these complexes to the conserved ciliary trafficking pathway. In terms of tissue distribution, expressed in olfactory sensory neurons in the antenna.

The protein localises to the cell membrane. Its function is as follows. Odorant receptor which mediates acceptance or avoidance behavior, depending on its substrates. The odorant receptor repertoire encodes a large collection of odor stimuli that vary widely in identity, intensity, and duration. May form a complex with Orco to form odorant-sensing units, providing sensitive and prolonged odorant signaling and calcium permeability. The protein is Odorant receptor 85f (Or85f) of Drosophila melanogaster (Fruit fly).